The sequence spans 430 residues: MTSVVVVGTQWGDEGKGKITDFLSANAEVIARYQGGDNAGHTIVIDGTKYKLHLIPSGIFFPEKISVIGNGVVVNPKSLVKEINYLHDSGVTTDNLRISDRAHVILPYHIKLDQLQEESKGENKIGTTNKGIGPAYMDKAARVGIRIADLLDKEIFAERLRTNLAEKNRLFEKMYESTPIEFDEIFEEYYAYGQEIKKYVTDTSVILNDALDQGKRVLFEGAQGVMLDIDQGTYPFVTSSNPVAGGVTIGSGVGPSKIDKVVGVCKAYTSRVGDGPFPTELHDEIGDRIREIGKEYGTTTGRPRRVGWFDSVVMRHSRRVSGITNLSLNSIDVLSGLGTLKICVAYDLDGERIDHYPASLEQLKRCKPIYEEMPGWSEDITGVRSLDELPEAARNYVRRISELVGVRISTFSVGPGREQTNILESVWSAK.

Residues 12 to 18 and 40 to 42 contribute to the GTP site; these read GDEGKGK and GHT. The active-site Proton acceptor is the Asp13. Asp13 and Gly40 together coordinate Mg(2+). IMP is bound by residues 13 to 16, 38 to 41, Thr128, Arg142, Gln223, Thr238, and Arg302; these read DEGK and NAGH. His41 serves as the catalytic Proton donor. Position 298–304 (298–304) interacts with substrate; the sequence is TTTGRPR. GTP-binding positions include Arg304, 330–332, and 412–414; these read SID and SVG.

The protein belongs to the adenylosuccinate synthetase family. As to quaternary structure, homodimer. Requires Mg(2+) as cofactor.

Its subcellular location is the cytoplasm. It carries out the reaction IMP + L-aspartate + GTP = N(6)-(1,2-dicarboxyethyl)-AMP + GDP + phosphate + 2 H(+). The protein operates within purine metabolism; AMP biosynthesis via de novo pathway; AMP from IMP: step 1/2. Plays an important role in the de novo pathway of purine nucleotide biosynthesis. Catalyzes the first committed step in the biosynthesis of AMP from IMP. In Streptococcus suis (strain 98HAH33), this protein is Adenylosuccinate synthetase.